We begin with the raw amino-acid sequence, 134 residues long: Methylglyoxal synthase (134 aa).

The MGS-like domain occupies 1–134; it reads MHIALIAHDE…DWRDLRRNDE (134 aa). Substrate-binding positions include H8, K12, 34-37, and 54-55; these read TGTT and SG. The Proton donor/acceptor role is filled by D60. H87 is a substrate binding site.

It belongs to the methylglyoxal synthase family.

The catalysed reaction is dihydroxyacetone phosphate = methylglyoxal + phosphate. Its function is as follows. Catalyzes the formation of methylglyoxal from dihydroxyacetone phosphate. The chain is Methylglyoxal synthase from Listeria innocua serovar 6a (strain ATCC BAA-680 / CLIP 11262).